Here is a 4454-residue protein sequence, read N- to C-terminus: E3 ubiquitin-protein ligase HUWE1 (4454 aa).

A disordered region spans residues 521-575; the sequence is RASSSNSSTSISGPGPGPGPGPGPGPGPGPGPGPGPGLGPSLGPGPGPGPRPGVQ. Residues 523 to 533 show a composition bias toward low complexity; the sequence is SSSNSSTSISG. Pro residues predominate over residues 535–571; the sequence is GPGPGPGPGPGPGPGPGPGPGPGLGPSLGPGPGPGPR. A phosphoserine mark is found at serine 724 and serine 725. 3 disordered regions span residues 781–834, 1054–1077, and 1094–1114; these read QKAD…VVGT, DEKA…AGSM, and TLAP…KSKI. The segment covering 801–811 has biased composition (acidic residues); that stretch reads ASSEDEEEEEV. Residues 813–832 show a composition bias toward polar residues; that stretch reads AMQSFNSAQQNETEPNQQVV. Position 816 is a phosphoserine (serine 816). Serine 1160 is subject to Phosphoserine. The span at 1367–1378 shows a compositional bias: basic and acidic residues; sequence LSKEKEGSRGEE. The segment at 1367–1396 is disordered; the sequence is LSKEKEGSRGEEEAGQEEGGSRREPQVNQQ. The UBA domain maps to 1392 to 1431; it reads QVNQQQLQQLMDMGFTREHAMEALLNTSTMEQATEYLLTH. Serine 1444, serine 1446, serine 1458, and serine 1471 each carry phosphoserine. In terms of domain architecture, UIM spans 1446-1465; the sequence is SEEDQMMRAIAMSLGQDIPM. Residues 1472–1491 are disordered; sequence PEEVACRKEEEERKAREKQE. A WWE domain is found at 1679 to 1756; that stretch reads RAQMTKYLQS…ETGNRRPVML (78 aa). The interval 1766–1802 is disordered; that stretch reads KNSKSSNGQELEKTLEESKETDIKRKENKGNDIPLAL. Basic and acidic residues predominate over residues 1775-1795; that stretch reads ELEKTLEESKETDIKRKENKG. Serine 1983 carries the phosphoserine modification. 3 disordered regions span residues 2095–2142, 2339–2420, and 2433–2556; these read APAE…SKPL, SLFG…QEMQ, and LERD…ASPL. Low complexity predominate over residues 2097–2112; that stretch reads AETSTTGTSQGEGAST. Threonine 2112 carries the phosphothreonine modification. Basic and acidic residues predominate over residues 2114–2134; it reads EETREGKKDKEGDRTSEEGKQ. Over residues 2339–2368 the composition is skewed to low complexity; that stretch reads SLFGSKSASSKSKSEQDAQGASQDSSSHQQ. Serine 2343 is subject to Phosphoserine. Lysine 2344 bears the N6-acetyllysine mark. 2 stretches are compositionally biased toward acidic residues: residues 2372 to 2383 and 2391 to 2402; these read EPGEAEVQEEDH and ADGDIMDGEAET. Residues serine 2439, serine 2442, and serine 2468 each carry the phosphoserine modification. A compositionally biased stretch (polar residues) spans 2465–2475; the sequence is SNLSQASTLQA. Positions 2485-2549 are enriched in acidic residues; sequence DPEDEEEHTQ…SEMELDEDYP (65 aa). 3 positions are modified to phosphoserine: serine 2604, serine 2609, and serine 2612. Threonine 2631 carries the phosphothreonine modification. A phosphoserine mark is found at serine 2661, serine 2672, and serine 2696. The span at 2781–2793 shows a compositional bias: basic and acidic residues; it reads IIDKGKEDKENRD. 2 disordered regions span residues 2781-3047 and 3113-3136; these read IIDK…GVDP and QQRA…MDPV. Residues 2794–2813 show a composition bias toward polar residues; it reads QSAQCTVSKTNDSTEQNVSD. Positions 2815-2849 are enriched in low complexity; the sequence is TPMPDSYPTTPSSTDAPTSESKETLGTLQPSQQQP. Residue threonine 2828 is modified to Phosphothreonine. Composition is skewed to polar residues over residues 2895–2912, 2924–2941, and 2954–2967; these read AETT…TSLS, AVSS…SLAS, and AGSS…SSTP. A phosphoserine mark is found at serine 2903, serine 2910, serine 2912, serine 2938, serine 2964, and serine 2965. Position 2966 is a phosphothreonine (threonine 2966). The segment covering 2990–3009 has biased composition (low complexity); it reads PPEDSSPPASSESSSTRDSA. Serine 2995 is subject to Phosphoserine. 5 positions are modified to phosphoserine: serine 3193, serine 3194, serine 3199, serine 3204, and serine 3212. The residue at position 3226 (arginine 3226) is an Omega-N-methylarginine. Disordered stretches follow at residues 3320-3343, 3431-3458, 3482-3501, 3548-3590, and 3615-3642; these read PKLS…SHEN, QRTK…SQSS, GKNS…ETSL, SEVQ…TTPV, and TPTT…EGGS. The span at 3432-3446 shows a compositional bias: basic and acidic residues; sequence RTKETNCESDRERGS. The span at 3447-3458 shows a compositional bias: low complexity; that stretch reads KQACSPCSSQSS. Low complexity-rich tracts occupy residues 3552–3579 and 3615–3628; these read TNSS…ATAP and TPTT…TSTT. Phosphoserine occurs at positions 3633, 3740, 3830, 3835, 3837, and 3838. Residues 3815 to 3836 are disordered; it reads TRRANKKAKQTGRLGSSGLGSA. Residues 3826 to 3836 are compositionally biased toward low complexity; that stretch reads GRLGSSGLGSA. 2 disordered regions span residues 3859-3927 and 3974-4028; these read EGQR…LPLL and RESK…SSSL. The span at 3871–3880 shows a compositional bias: polar residues; that stretch reads TSESSNQSET. Phosphoserine is present on residues serine 3887, serine 3895, and serine 3907. Residues 3894-3905 are compositionally biased toward polar residues; sequence PSPSAQDTQSIV. Phosphothreonine is present on threonine 3910. 2 stretches are compositionally biased toward basic and acidic residues: residues 3913-3922 and 3974-3995; these read GEKEKEERPP and RESK…KDEP. Residues serine 3986 and serine 3999 each carry the phosphoserine modification. Residues 3996 to 4005 show a composition bias toward pro residues; it reads PPLSPAPLTP. Residues threonine 4004 and threonine 4007 each carry the phosphothreonine modification. Polar residues predominate over residues 4018-4028; the sequence is EPSSMHISSSL. In terms of domain architecture, HECT spans 4118–4454; the sequence is SPEEMKNRLY…QECSEGFGLA (337 aa). Tyrosine 4351 is subject to Phosphotyrosine. The active-site Glycyl thioester intermediate is cysteine 4421.

Belongs to the UPL family. TOM1/PTR1 subfamily. Interacts with isoform p14ARF of CDKN2A which strongly inhibits HUWE1 ubiquitin ligase activity. Interacts with MYCN, POLB and CDC6. Interacts with isoform 2 of PA2G4. Interacts with NR1D1. Interacts with AMBRA1. Interacts with HAPSTR1. Interacts with HAPSTR2. In hepatocytes, interacts with PAQR3; the interaction promotes PPARA poylubiquitination and STUB1-mediated degradation. Post-translationally, phosphorylated on tyrosine, phosphorylation is probably required for its ability to inhibit TP53 transactivation. As to expression, widely expressed.

Its subcellular location is the cytoplasm. It localises to the nucleus. The protein localises to the mitochondrion. It catalyses the reaction S-ubiquitinyl-[E2 ubiquitin-conjugating enzyme]-L-cysteine + [acceptor protein]-L-lysine = [E2 ubiquitin-conjugating enzyme]-L-cysteine + N(6)-ubiquitinyl-[acceptor protein]-L-lysine.. Its pathway is protein modification; protein ubiquitination. Its function is as follows. E3 ubiquitin-protein ligase which mediates ubiquitination and subsequent proteasomal degradation of target proteins. Regulates apoptosis by catalyzing the polyubiquitination and degradation of MCL1. Mediates monoubiquitination of DNA polymerase beta (POLB) at 'Lys-41', 'Lys-61' and 'Lys-81', thereby playing a role in base-excision repair. Also ubiquitinates the p53/TP53 tumor suppressor and core histones including H1, H2A, H2B, H3 and H4. Ubiquitinates MFN2 to negatively regulate mitochondrial fusion in response to decreased stearoylation of TFRC. Ubiquitination of MFN2 also takes place following induction of mitophagy; AMBRA1 acts as a cofactor for HUWE1-mediated ubiquitination. Regulates neural differentiation and proliferation by catalyzing the polyubiquitination and degradation of MYCN. May regulate abundance of CDC6 after DNA damage by polyubiquitinating and targeting CDC6 to degradation. Mediates polyubiquitination of PA2G4. Acts in concert with MYCBP2 to regulate the circadian clock gene expression by promoting the lithium-induced ubiquination and degradation of NR1D1. Binds to an upstream initiator-like sequence in the preprodynorphin gene. Mediates HAPSTR1 degradation, but is also a required cofactor in the pathway by which HAPSTR1 governs stress signaling. Acts as a regulator of the JNK and NF-kappa-B signaling pathways by mediating assembly of heterotypic 'Lys-63'-/'Lys-48'-linked branched ubiquitin chains that are then recognized by TAB2: HUWE1 mediates branching of 'Lys-48'-linked chains of substrates initially modified with 'Lys-63'-linked conjugates by TRAF6. 'Lys-63'-/'Lys-48'-linked branched ubiquitin chains protect 'Lys-63'-linkages from CYLD deubiquitination. Ubiquitinates PPARA in hepatocytes. The protein is E3 ubiquitin-protein ligase HUWE1 (Huwe1) of Rattus norvegicus (Rat).